The primary structure comprises 321 residues: GDP-L-fucose synthase (321 aa).

Position 14–20 (14–20 (GGSGLVG)) interacts with NADP(+). Y143 functions as the Proton donor/acceptor in the catalytic mechanism. Residues K147, 170–173 (PTNV), and H186 contribute to the NADP(+) site. Substrate contacts are provided by K194, W208, R215, and D277.

It belongs to the NAD(P)-dependent epimerase/dehydratase family. Fucose synthase subfamily. In terms of assembly, homodimer.

The enzyme catalyses GDP-beta-L-fucose + NADP(+) = GDP-4-dehydro-alpha-D-rhamnose + NADPH + H(+). It functions in the pathway nucleotide-sugar biosynthesis; GDP-L-fucose biosynthesis via de novo pathway; GDP-L-fucose from GDP-alpha-D-mannose: step 2/2. Catalyzes the two-step NADP-dependent conversion of GDP-4-dehydro-6-deoxy-D-mannose to GDP-fucose, involving an epimerase and a reductase reaction. This Cricetulus griseus (Chinese hamster) protein is GDP-L-fucose synthase (GFUS).